The chain runs to 415 residues: L-cysteine:1D-myo-inositol 2-amino-2-deoxy-alpha-D-glucopyranoside ligase (415 aa).

Cys-43 serves as a coordination point for Zn(2+). L-cysteinyl-5'-AMP is bound by residues 43–46 (CGIT), Thr-58, and 81–83 (NVT). Residues 45–55 (ITPYDATHLGH) carry the 'HIGH' region motif. The short motif at 187–192 (ERGGDP) is the 'ERGGDP' region element. Position 227 (Trp-227) interacts with L-cysteinyl-5'-AMP. Cys-231 contributes to the Zn(2+) binding site. Residue 249–251 (GSD) participates in L-cysteinyl-5'-AMP binding. His-256 contacts Zn(2+). Ile-283 serves as a coordination point for L-cysteinyl-5'-AMP. A 'KMSKS' region motif is present at residues 289–293 (KMSKS).

This sequence belongs to the class-I aminoacyl-tRNA synthetase family. MshC subfamily. Monomer. Requires Zn(2+) as cofactor.

It carries out the reaction 1D-myo-inositol 2-amino-2-deoxy-alpha-D-glucopyranoside + L-cysteine + ATP = 1D-myo-inositol 2-(L-cysteinylamino)-2-deoxy-alpha-D-glucopyranoside + AMP + diphosphate + H(+). Its function is as follows. Catalyzes the ATP-dependent condensation of GlcN-Ins and L-cysteine to form L-Cys-GlcN-Ins. In Saccharomonospora viridis (strain ATCC 15386 / DSM 43017 / JCM 3036 / CCUG 5913 / NBRC 12207 / NCIMB 9602 / P101) (Thermoactinomyces viridis), this protein is L-cysteine:1D-myo-inositol 2-amino-2-deoxy-alpha-D-glucopyranoside ligase.